Consider the following 645-residue polypeptide: 1,4-alpha-glucan branching enzyme GlgB (645 aa).

The Nucleophile role is filled by Asp309. Glu352 (proton donor) is an active-site residue. The tract at residues Val619 to Arg645 is disordered. Polar residues predominate over residues Arg636 to Arg645.

The protein belongs to the glycosyl hydrolase 13 family. GlgB subfamily. Monomer.

The enzyme catalyses Transfers a segment of a (1-&gt;4)-alpha-D-glucan chain to a primary hydroxy group in a similar glucan chain.. It participates in glycan biosynthesis; glycogen biosynthesis. Catalyzes the formation of the alpha-1,6-glucosidic linkages in glycogen by scission of a 1,4-alpha-linked oligosaccharide from growing alpha-1,4-glucan chains and the subsequent attachment of the oligosaccharide to the alpha-1,6 position. This Bacillus cereus (strain Q1) protein is 1,4-alpha-glucan branching enzyme GlgB.